A 670-amino-acid chain; its full sequence is Mannosyl-oligosaccharide alpha-1,2-mannosidase IA (670 aa).

At 1 to 30 (MTGILPTYQRFVNGVPVPSISRRSFRLREK) the chain is on the cytoplasmic side. The chain crosses the membrane as a helical; Signal-anchor for type II membrane protein span at residues 31-51 (YLIVSVLLTFGIVWLGALFYL). Topologically, residues 52 to 670 (PEFKSSNSVN…EPAHAQNNRI (619 aa)) are lumenal. An N-linked (GlcNAc...) asparagine glycan is attached at Asn-61. The interval 135–177 (DVAPSVSSSRGPSKPPVDAIEEPAVGNNAANKDVSPSGPKAES) is disordered. A disulfide bridge links Cys-480 with Cys-512. Glu-526 functions as the Proton donor in the catalytic mechanism. Thr-637 lines the Ca(2+) pocket.

This sequence belongs to the glycosyl hydrolase 47 family. Ca(2+) serves as cofactor. In terms of processing, N-glycosylated. Contains high mannose-type oligosaccharides.

It localises to the golgi apparatus membrane. The catalysed reaction is N(4)-(alpha-D-Man-(1-&gt;2)-alpha-D-Man-(1-&gt;2)-alpha-D-Man-(1-&gt;3)-[alpha-D-Man-(1-&gt;2)-alpha-D-Man-(1-&gt;3)-[alpha-D-Man-(1-&gt;2)-alpha-D-Man-(1-&gt;6)]-alpha-D-Man-(1-&gt;6)]-beta-D-Man-(1-&gt;4)-beta-D-GlcNAc-(1-&gt;4)-beta-D-GlcNAc)-L-asparaginyl-[protein] (N-glucan mannose isomer 9A1,2,3B1,2,3) + 4 H2O = N(4)-(alpha-D-Man-(1-&gt;3)-[alpha-D-Man-(1-&gt;3)-[alpha-D-Man-(1-&gt;6)]-alpha-D-Man-(1-&gt;6)]-beta-D-Man-(1-&gt;4)-beta-D-GlcNAc-(1-&gt;4)-beta-D-GlcNAc)-L-asparaginyl-[protein] (N-glucan mannose isomer 5A1,2) + 4 beta-D-mannose. The enzyme catalyses N(4)-(alpha-D-Man-(1-&gt;2)-alpha-D-Man-(1-&gt;2)-alpha-D-Man-(1-&gt;3)-[alpha-D-Man-(1-&gt;3)-[alpha-D-Man-(1-&gt;2)-alpha-D-Man-(1-&gt;6)]-alpha-D-Man-(1-&gt;6)]-beta-D-Man-(1-&gt;4)-beta-D-GlcNAc-(1-&gt;4)-beta-D-GlcNAc)-L-asparaginyl-[protein] (N-glucan mannose isomer 8A1,2,3B1,3) + 3 H2O = N(4)-(alpha-D-Man-(1-&gt;3)-[alpha-D-Man-(1-&gt;3)-[alpha-D-Man-(1-&gt;6)]-alpha-D-Man-(1-&gt;6)]-beta-D-Man-(1-&gt;4)-beta-D-GlcNAc-(1-&gt;4)-beta-D-GlcNAc)-L-asparaginyl-[protein] (N-glucan mannose isomer 5A1,2) + 3 beta-D-mannose. Its pathway is protein modification; protein glycosylation. Strongly inhibited by 1-deoxymannojirimycin, an inhibitor of class I alpha-mannosidases, and by EDTA. EDTA inhibition is reversed by the addition of calcium, but not of magnesium. Functionally, involved in the maturation of Asn-linked oligosaccharides. Converts Man(9)GlcNAc(2) to Man(5)GlcNAc(2) primarily through the Man(7)GlcNAc(2) isomer C processing intermediate. The chain is Mannosyl-oligosaccharide alpha-1,2-mannosidase IA from Spodoptera frugiperda (Fall armyworm).